A 746-amino-acid polypeptide reads, in one-letter code: Exostosin-1 (746 aa).

Residues 1–7 lie on the Cytoplasmic side of the membrane; that stretch reads MQAKKRY. The chain crosses the membrane as a helical; Signal-anchor for type II membrane protein span at residues 8-28; it reads FILLSAGSCLALLFYFGGLQF. At 29–746 the chain is on the lumenal side; sequence RASRSHSRRE…RKKYRDIERL (718 aa). An N-linked (GlcNAc...) asparagine glycan is attached at N89. 2 disulfide bridges follow: C98–C103 and C109–C152. Residues L166 and Y203 each coordinate a protein. 4 residues coordinate UDP: K267, K269, Y271, and R280. C298 and C312 are disulfide-bonded. H300 contributes to the a protein binding site. Y319 and Y324 together coordinate UDP. An N-linked (GlcNAc...) asparagine glycan is attached at N330. 2 disulfides stabilise this stretch: C334-C355 and C652-C704. Positions 346 and 349 each coordinate UDP.

The protein belongs to the glycosyltransferase 47 family. In terms of assembly, part of the heparan sulfate polymerase, a dimeric complex composed of EXT1 and EXT2. Could also form homooligomeric complexes. Interacts with NDST1. Post-translationally, N-glycosylated.

It localises to the golgi apparatus membrane. It is found in the golgi apparatus. Its subcellular location is the cis-Golgi network membrane. The protein localises to the endoplasmic reticulum membrane. It catalyses the reaction 3-O-{alpha-D-GlcNAc-[(1-&gt;4)-beta-D-GlcA-(1-&gt;4)-alpha-D-GlcNAc](n)-(1-&gt;4)-beta-D-GlcA-(1-&gt;3)-beta-D-Gal-(1-&gt;3)-beta-D-Gal-(1-&gt;4)-beta-D-Xyl}-L-seryl-[protein] + UDP-alpha-D-glucuronate = 3-O-{[(1-&gt;4)-beta-D-GlcA-(1-&gt;4)-alpha-D-GlcNAc](n+1)-(1-&gt;4)-beta-D-GlcA-(1-&gt;3)-beta-D-Gal-(1-&gt;3)-beta-D-Gal-(1-&gt;4)-beta-D-Xyl}-L-seryl-[protein] + UDP + H(+). Its pathway is protein modification; protein glycosylation. In terms of biological role, glycosyltransferase forming with EXT2 the heterodimeric heparan sulfate polymerase which catalyzes the elongation of the heparan sulfate glycan backbone. Glycan backbone extension consists in the alternating transfer of (1-&gt;4)-beta-D-GlcA and (1-&gt;4)-alpha-D-GlcNAc residues from their respective UDP-sugar donors. Both EXT1 and EXT2 are required for the full activity of the polymerase since EXT1 bears the N-acetylglucosaminyl-proteoglycan 4-beta-glucuronosyltransferase activity within the complex while EXT2 carries the glucuronosyl-N-acetylglucosaminyl-proteoglycan 4-alpha-N-acetylglucosaminyltransferase activity. Heparan sulfate proteoglycans are ubiquitous components of the extracellular matrix and play an important role in tissue homeostasis and signaling. This Bos taurus (Bovine) protein is Exostosin-1 (EXT1).